A 105-amino-acid polypeptide reads, in one-letter code: Cell division protein FtsB (105 aa).

The Cytoplasmic portion of the chain corresponds to 1-3 (MGK). Residues 4-21 (LTLLLLALLVWLQYSLWF) traverse the membrane as a helical segment. The Periplasmic portion of the chain corresponds to 22 to 105 (GKNGLHDYTR…QASGQQQNNR (84 aa)). Residues 33–62 (NDDVTAQQATNAKLKARNDQLFAEIDDLNG) adopt a coiled-coil conformation.

This sequence belongs to the FtsB family. Part of a complex composed of FtsB, FtsL and FtsQ.

The protein resides in the cell inner membrane. In terms of biological role, essential cell division protein. May link together the upstream cell division proteins, which are predominantly cytoplasmic, with the downstream cell division proteins, which are predominantly periplasmic. The polypeptide is Cell division protein FtsB (Klebsiella aerogenes (Enterobacter aerogenes)).